A 235-amino-acid chain; its full sequence is Phosphoribosylformylglycinamidine synthase subunit PurQ (235 aa).

The region spanning Phe-5–Ala-235 is the Glutamine amidotransferase type-1 domain. Cys-88 serves as the catalytic Nucleophile. Catalysis depends on residues His-205 and Glu-207.

Part of the FGAM synthase complex composed of 1 PurL, 1 PurQ and 2 PurS subunits.

The protein resides in the cytoplasm. It catalyses the reaction N(2)-formyl-N(1)-(5-phospho-beta-D-ribosyl)glycinamide + L-glutamine + ATP + H2O = 2-formamido-N(1)-(5-O-phospho-beta-D-ribosyl)acetamidine + L-glutamate + ADP + phosphate + H(+). The enzyme catalyses L-glutamine + H2O = L-glutamate + NH4(+). It functions in the pathway purine metabolism; IMP biosynthesis via de novo pathway; 5-amino-1-(5-phospho-D-ribosyl)imidazole from N(2)-formyl-N(1)-(5-phospho-D-ribosyl)glycinamide: step 1/2. Functionally, part of the phosphoribosylformylglycinamidine synthase complex involved in the purines biosynthetic pathway. Catalyzes the ATP-dependent conversion of formylglycinamide ribonucleotide (FGAR) and glutamine to yield formylglycinamidine ribonucleotide (FGAM) and glutamate. The FGAM synthase complex is composed of three subunits. PurQ produces an ammonia molecule by converting glutamine to glutamate. PurL transfers the ammonia molecule to FGAR to form FGAM in an ATP-dependent manner. PurS interacts with PurQ and PurL and is thought to assist in the transfer of the ammonia molecule from PurQ to PurL. This is Phosphoribosylformylglycinamidine synthase subunit PurQ from Salinibacter ruber (strain DSM 13855 / M31).